Consider the following 181-residue polypeptide: DNA-packaging protein NU1 homolog (181 aa).

This sequence to phage lambda DNA packaging protein NU1.

This chain is DNA-packaging protein NU1 homolog (nohD), found in Escherichia coli (strain K12).